Here is a 157-residue protein sequence, read N- to C-terminus: Large ribosomal subunit protein uL11 (157 aa).

Disordered stretches follow at residues Met1–Pro28 and Asn138–Lys157. Basic and acidic residues predominate over residues Asn139–Lys157.

The protein belongs to the universal ribosomal protein uL11 family. Part of the ribosomal stalk of the 50S ribosomal subunit. Interacts with L10 and the large rRNA to form the base of the stalk. L10 forms an elongated spine to which L12 dimers bind in a sequential fashion forming a multimeric L10(L12)X complex.

Forms part of the ribosomal stalk which helps the ribosome interact with GTP-bound translation factors. The protein is Large ribosomal subunit protein uL11 of Haloquadratum walsbyi (strain DSM 16790 / HBSQ001).